The sequence spans 1153 residues: uncharacterized protein (1153 aa).

Disordered regions lie at residues 164–193 (TTIKQLPPPLPQPQPQPHQQQPHNKKQIDD), 224–245 (DNYDDIDNNNNNNNNSNNDDDK), 294–316 (KSPQKLKLQQQQQQQQQQKQSKH), 332–427 (EHKL…KNKK), 613–648 (LSMLDSTNDGSSQEYEEEEEEEKNQKNFEKEEEGEN), 683–703 (QQQQQEKEKQQQEKQQDEEMS), 717–740 (KSDDNNNNNDNNNNNNNNQTSKRK), 772–819 (NKKL…KTIE), 838–874 (ASSGGSNNNNNNDQNDSITTKEKERSETIKTHNEDEK), and 942–1106 (NNNN…NNEV). Residues 169–179 (LPPPLPQPQPQ) are compositionally biased toward pro residues. Low complexity-rich tracts occupy residues 231–240 (NNNNNNNNSN), 298–312 (KLKLQQQQQQQQQQK), 336–391 (QQQQ…TPKK), and 399–423 (NNVNNNNNNNNNNNNNNNNNNNNNN). Over residues 613–625 (LSMLDSTNDGSSQ) the composition is skewed to polar residues. The span at 687–699 (QEKEKQQQEKQQD) shows a compositional bias: basic and acidic residues. The span at 721–734 (NNNNNDNNNNNNNN) shows a compositional bias: low complexity. Basic and acidic residues predominate over residues 772–784 (NKKLRVDSEDQQT). Composition is skewed to low complexity over residues 788-808 (TTTTTTTTTTTNTNNNNNNNN) and 839-854 (SSGGSNNNNNNDQNDS). Over residues 856–874 (TTKEKERSETIKTHNEDEK) the composition is skewed to basic and acidic residues. The segment covering 942-987 (NNNNNNNNNINNINNIGNKNTTVNNSNHSNHSNNNINNNNIFKNSN) has biased composition (low complexity). 2 stretches are compositionally biased toward polar residues: residues 988 to 998 (PIVDTNFSSTT) and 1005 to 1015 (QSKIFTGNQLP). Residues 1019-1059 (INNENVVNNNNNNEINNTTTTTTNNNSGIHKNNNNYNSDNS) are compositionally biased toward low complexity. Basic and acidic residues predominate over residues 1064 to 1081 (DGLKQEKEEQKEEQKENK). The segment covering 1082–1105 (NNNNNNNNNNNNNNNNNNNNNNNE) has biased composition (low complexity).

This is an uncharacterized protein from Dictyostelium discoideum (Social amoeba).